The following is a 261-amino-acid chain: 5'-nucleotidase SurE (261 aa).

A divalent metal cation is bound by residues Asp-8, Asp-9, Ser-39, and Asn-94.

This sequence belongs to the SurE nucleotidase family. The cofactor is a divalent metal cation.

It is found in the cytoplasm. It catalyses the reaction a ribonucleoside 5'-phosphate + H2O = a ribonucleoside + phosphate. Functionally, nucleotidase that shows phosphatase activity on nucleoside 5'-monophosphates. The polypeptide is 5'-nucleotidase SurE (Archaeoglobus fulgidus (strain ATCC 49558 / DSM 4304 / JCM 9628 / NBRC 100126 / VC-16)).